The sequence spans 115 residues: Hydrogenase maturation factor HypA (115 aa).

Residue histidine 2 coordinates Ni(2+). Zn(2+) contacts are provided by cysteine 73, cysteine 76, cysteine 89, and cysteine 92.

The protein belongs to the HypA/HybF family.

Functionally, involved in the maturation of [NiFe] hydrogenases. Required for nickel insertion into the metal center of the hydrogenase. In Polaromonas naphthalenivorans (strain CJ2), this protein is Hydrogenase maturation factor HypA.